The chain runs to 88 residues: Small ribosomal subunit protein bS20 (88 aa).

The tract at residues 1 to 23 is disordered; that stretch reads MANSPQAKKRARQNDKARAHNAS.

It belongs to the bacterial ribosomal protein bS20 family.

Binds directly to 16S ribosomal RNA. In Teredinibacter turnerae (strain ATCC 39867 / T7901), this protein is Small ribosomal subunit protein bS20.